A 114-amino-acid polypeptide reads, in one-letter code: Immunoglobulin kappa variable 6D-21 (114 aa).

The N-terminal stretch at 1–19 (MSPSQLIGFLLLWVPASRG) is a signal peptide. Positions 20 to 42 (EIVLTQSPDFQSVTPKEKVTITC) are framework-1. Residues 20–114 (EIVLTQSPDF…YYCHQSSSLP (95 aa)) enclose the Ig-like domain. Residues C42 and C107 are joined by a disulfide bond. The segment at 43 to 53 (RASQSIGSSLH) is complementarity-determining-1. The framework-2 stretch occupies residues 54-68 (WYQQKPDQSPKLLIK). The complementarity-determining-2 stretch occupies residues 69 to 75 (YASQSIS). The segment at 76–107 (GVPSRFSGSGSGTDFTLTINSLEAEDAAAYYC) is framework-3. The complementarity-determining-3 stretch occupies residues 108-114 (HQSSSLP).

In terms of assembly, immunoglobulins are composed of two identical heavy chains and two identical light chains; disulfide-linked.

It is found in the secreted. It localises to the cell membrane. V region of the variable domain of immunoglobulin light chains that participates in the antigen recognition. Immunoglobulins, also known as antibodies, are membrane-bound or secreted glycoproteins produced by B lymphocytes. In the recognition phase of humoral immunity, the membrane-bound immunoglobulins serve as receptors which, upon binding of a specific antigen, trigger the clonal expansion and differentiation of B lymphocytes into immunoglobulins-secreting plasma cells. Secreted immunoglobulins mediate the effector phase of humoral immunity, which results in the elimination of bound antigens. The antigen binding site is formed by the variable domain of one heavy chain, together with that of its associated light chain. Thus, each immunoglobulin has two antigen binding sites with remarkable affinity for a particular antigen. The variable domains are assembled by a process called V-(D)-J rearrangement and can then be subjected to somatic hypermutations which, after exposure to antigen and selection, allow affinity maturation for a particular antigen. The sequence is that of Immunoglobulin kappa variable 6D-21 from Homo sapiens (Human).